The primary structure comprises 95 residues: DNA-directed RNA polymerase subunit Rpo11 (95 aa).

This sequence belongs to the archaeal Rpo11/eukaryotic RPB11/RPC19 RNA polymerase subunit family. Part of the RNA polymerase complex.

It is found in the cytoplasm. It carries out the reaction RNA(n) + a ribonucleoside 5'-triphosphate = RNA(n+1) + diphosphate. Its function is as follows. DNA-dependent RNA polymerase (RNAP) catalyzes the transcription of DNA into RNA using the four ribonucleoside triphosphates as substrates. The protein is DNA-directed RNA polymerase subunit Rpo11 of Methanococcus vannielii (strain ATCC 35089 / DSM 1224 / JCM 13029 / OCM 148 / SB).